A 28-amino-acid polypeptide reads, in one-letter code: Putative fruR/shl operon leader peptide (28 aa).

The polypeptide is Putative fruR/shl operon leader peptide (fruL) (Escherichia coli O6:H1 (strain CFT073 / ATCC 700928 / UPEC)).